The following is a 198-amino-acid chain: NAD(P)H dehydrogenase (quinone) (198 aa).

A Flavodoxin-like domain is found at 4 to 189 (VLVLYYSMYG…SIARYQGEYV (186 aa)). FMN-binding positions include 10–15 (SMYGHI) and 78–80 (TRF). An NAD(+)-binding site is contributed by Tyr12. Trp98 lines the substrate pocket. Residues 113-118 (STGTGG) and His133 contribute to the FMN site.

This sequence belongs to the WrbA family. It depends on FMN as a cofactor.

The catalysed reaction is a quinone + NADH + H(+) = a quinol + NAD(+). It catalyses the reaction a quinone + NADPH + H(+) = a quinol + NADP(+). In Shigella dysenteriae serotype 1 (strain Sd197), this protein is NAD(P)H dehydrogenase (quinone).